A 360-amino-acid chain; its full sequence is Alanine racemase (360 aa).

The active-site Proton acceptor; specific for D-alanine is Lys36. N6-(pyridoxal phosphate)lysine is present on Lys36. Arg132 contacts substrate. The Proton acceptor; specific for L-alanine role is filled by Tyr256. Met304 provides a ligand contact to substrate.

Belongs to the alanine racemase family. Pyridoxal 5'-phosphate is required as a cofactor.

The catalysed reaction is L-alanine = D-alanine. It participates in amino-acid biosynthesis; D-alanine biosynthesis; D-alanine from L-alanine: step 1/1. Catalyzes the interconversion of L-alanine and D-alanine. May also act on other amino acids. This Pasteurella multocida (strain Pm70) protein is Alanine racemase (alr).